The chain runs to 421 residues: Inner membrane transport protein YdiN (421 aa).

Residues 1-9 (MSQNKAFST) lie on the Cytoplasmic side of the membrane. Residues 10 to 30 (PFILAVLCIYFSYFLHGISVI) form a helical membrane-spanning segment. Over 31–49 (TLAQNMSSLAEKFSTDNAG) the chain is Periplasmic. Residues 50–70 (IAYLISGIGLGRLISILFFGV) traverse the membrane as a helical segment. At 71 to 78 (ISDKFGRR) the chain is on the cytoplasmic side. A helical transmembrane segment spans residues 79 to 99 (AVILMAVIMYLLFFFGIPACP). N100 is a topological domain (periplasmic). Residues 101 to 121 (LTLAYGLAVCVGIANSALDTG) traverse the membrane as a helical segment. Topologically, residues 122-136 (GYPALMECFPKASGS) are cytoplasmic. The chain crosses the membrane as a helical span at residues 137–157 (AVILVKAMVSFGQMFYPMLVS). Residues 158–163 (YMLLNN) lie on the Periplasmic side of the membrane. The chain crosses the membrane as a helical span at residues 164–184 (IWYGYGLIIPGILFVLITLML). Residues 185–215 (LKSKFPSQLVDASVTNELPQMNSKPLVWLEG) are Cytoplasmic-facing. A helical transmembrane segment spans residues 216–236 (VSSVLFGVAAFSTFYVIVVWM). Residues 237–251 (PKYAMAFAGMSEAEA) lie on the Periplasmic side of the membrane. Residues 252–272 (LKTISYYSMGSLVCVFIFAAL) form a helical membrane-spanning segment. Residues 273–279 (LKKMVRP) lie on the Cytoplasmic side of the membrane. Residues 280 to 300 (IWANVFNSALATITAAIIYLY) traverse the membrane as a helical segment. At 301-308 (PSPLVCNA) the chain is on the periplasmic side. The chain crosses the membrane as a helical span at residues 309-329 (GAFVIGFSAAGGILQLGVSVM). Over 330-342 (SEFFPKSKAKVTS) the chain is Cytoplasmic. Residues 343–363 (IYMMMGGLANFVIPLITGYLS) form a helical membrane-spanning segment. Residues 364 to 369 (NIGLQY) lie on the Periplasmic side of the membrane. The chain crosses the membrane as a helical span at residues 370-390 (IIVLDFTFALLALITAIIVFI). Residues 391–421 (RYYRVFIIPENDVRFGERKFCTRLNTIKHRG) are Cytoplasmic-facing.

The protein belongs to the major facilitator superfamily.

It localises to the cell inner membrane. In Escherichia coli (strain K12), this protein is Inner membrane transport protein YdiN (ydiN).